The primary structure comprises 161 residues: Cytochrome c-type biogenesis protein CcmE (161 aa).

At 1–8 the chain is on the cytoplasmic side; the sequence is MNARRKKR. A helical; Signal-anchor for type II membrane protein membrane pass occupies residues 9–29; the sequence is LALATALIGGVAAIASLLLYA. The Periplasmic segment spans residues 30–161; it reads LNSNLNLFYT…DYNAEQKSGY (132 aa). Histidine 131 and tyrosine 135 together coordinate heme.

It belongs to the CcmE/CycJ family.

Its subcellular location is the cell inner membrane. Heme chaperone required for the biogenesis of c-type cytochromes. Transiently binds heme delivered by CcmC and transfers the heme to apo-cytochromes in a process facilitated by CcmF and CcmH. The sequence is that of Cytochrome c-type biogenesis protein CcmE from Shewanella woodyi (strain ATCC 51908 / MS32).